Reading from the N-terminus, the 239-residue chain is Pyridoxine 5'-phosphate synthase (239 aa).

Asparagine 9 contributes to the 3-amino-2-oxopropyl phosphate binding site. Position 11-12 (11-12 (DH)) interacts with 1-deoxy-D-xylulose 5-phosphate. A 3-amino-2-oxopropyl phosphate-binding site is contributed by arginine 20. Histidine 45 functions as the Proton acceptor in the catalytic mechanism. Arginine 47 and histidine 52 together coordinate 1-deoxy-D-xylulose 5-phosphate. Glutamate 72 (proton acceptor) is an active-site residue. 1-deoxy-D-xylulose 5-phosphate is bound at residue threonine 102. Histidine 189 serves as the catalytic Proton donor. Residues glycine 190 and 211–212 (GH) each bind 3-amino-2-oxopropyl phosphate.

This sequence belongs to the PNP synthase family. As to quaternary structure, homooctamer; tetramer of dimers.

Its subcellular location is the cytoplasm. The enzyme catalyses 3-amino-2-oxopropyl phosphate + 1-deoxy-D-xylulose 5-phosphate = pyridoxine 5'-phosphate + phosphate + 2 H2O + H(+). It functions in the pathway cofactor biosynthesis; pyridoxine 5'-phosphate biosynthesis; pyridoxine 5'-phosphate from D-erythrose 4-phosphate: step 5/5. Functionally, catalyzes the complicated ring closure reaction between the two acyclic compounds 1-deoxy-D-xylulose-5-phosphate (DXP) and 3-amino-2-oxopropyl phosphate (1-amino-acetone-3-phosphate or AAP) to form pyridoxine 5'-phosphate (PNP) and inorganic phosphate. This Ehrlichia chaffeensis (strain ATCC CRL-10679 / Arkansas) protein is Pyridoxine 5'-phosphate synthase.